The following is a 638-amino-acid chain: Zinc finger protein 143 (638 aa).

Position 1 is an N-acetylmethionine (Met-1). Lys-213 participates in a covalent cross-link: Glycyl lysine isopeptide (Lys-Gly) (interchain with G-Cter in SUMO2). 4 consecutive C2H2-type zinc fingers follow at residues 237-261 (FRCKYDGCGKLYTTAHHLKVHERSH), 267-291 (YQCEHSGCGKAFATGYGLKSHFRTH), 297-321 (YRCSEDNCTKSFKTSGDLQKHIRTH), and 327-351 (FKCPIEGCGRSFTTSNIRKVHIRTH). The residue at position 352 (Thr-352) is a Phosphothreonine. 3 consecutive C2H2-type zinc fingers follow at residues 357–381 (YYCTEPGCGRAFASATNYKNHVRIH), 387–411 (YVCTVPGCDKRFTEYSSLYKHHVVH), and 417–440 (YNCNHCGKTYKQISTLAMHKRTAH). Lys-406 is covalently cross-linked (Glycyl lysine isopeptide (Lys-Gly) (interchain with G-Cter in SUMO2)).

It belongs to the GLI C2H2-type zinc-finger protein family. Interacts with CHD8. Forms a complex with HCFC1 and ZNF143.

Its subcellular location is the nucleus. Functionally, transcriptional activator. In complex with HCFC1 and ZNF143, regulates the expression of several genes, including AP2S1, ESCO2, OPHN1, RBL1, UBXN8 and ZNF32. Activates the gene for selenocysteine tRNA (tRNAsec). Binds to the SPH motif of small nuclear RNA (snRNA) gene promoters. Participates in efficient U6 RNA polymerase III transcription via its interaction with CHD8. This chain is Zinc finger protein 143 (Znf143), found in Rattus norvegicus (Rat).